The following is a 657-amino-acid chain: Pyoverdine export ATP-binding/permease protein PvdT (657 aa).

An ABC transporter domain is found at Ile6–Ala245. An ATP-binding site is contributed by Gly43–Ser50. The next 4 helical transmembrane spans lie at Ala285–Gly305, Ile539–Val559, Leu590–Ile610, and Leu620–Met640.

Belongs to the ABC transporter superfamily. Macrolide exporter (TC 3.A.1.122) family. In terms of assembly, part of the tripartite efflux system PvdRT-OpmQ, which is composed of an inner membrane component with both ATPase and permease domains, PvdT, a periplasmic membrane fusion protein, PvdR, and an outer membrane component, OpmQ.

Its subcellular location is the cell inner membrane. Its function is as follows. Part of the tripartite efflux system PvdRT-OpmQ required for the secretion into the extracellular milieu of the siderophore pyoverdine (PVD), which is involved in iron acquisition. This subunit binds PVD and drives its secretion by hydrolyzing ATP. The system is responsible for export of newly synthesized PVD after the final steps of biosynthesis have taken place in the periplasm. It is also responsible for recycling of PVD after internalization of ferri-PVD into the periplasm by the outer-membrane receptor FpvA and release of iron from PVD, thus making PVD available for new cycles of iron uptake. In Pseudomonas fluorescens (strain Pf0-1), this protein is Pyoverdine export ATP-binding/permease protein PvdT.